We begin with the raw amino-acid sequence, 191 residues long: Ferric nitrobindin-like protein (191 aa).

The GXWXGXG signature appears at 20–26 (GNWAGAG).

This sequence belongs to the nitrobindin family.

The protein is Ferric nitrobindin-like protein of Streptomyces avermitilis (strain ATCC 31267 / DSM 46492 / JCM 5070 / NBRC 14893 / NCIMB 12804 / NRRL 8165 / MA-4680).